Consider the following 317-residue polypeptide: Ataxin-3 homolog (317 aa).

The 172-residue stretch at isoleucine 7–leucine 178 folds into the Josephin domain. Cysteine 20 functions as the Nucleophile in the catalytic mechanism. Histidine 117 acts as the Proton acceptor in catalysis. The active site involves asparagine 132. 2 UIM domains span residues serine 219–serine 239 and glutamate 247–glycine 264. Residues arginine 254–lysine 317 form a disordered region. Over residues arginine 276–glutamate 293 the composition is skewed to polar residues. Residues glutamine 294–lysine 317 are compositionally biased toward basic and acidic residues. The segment at arginine 296–arginine 299 is interaction with cdc-48.1 and cdc-48.2.

As to quaternary structure, forms a complex composed of deubiquitinating enzyme atx-3, adapter ubxn-5 and cdc-48.1. Forms a complex composed of deubiquitinating enzyme atx-3, E4 ubiquitin-protein ligase ufd-2 and cdc-48.1. Interacts (via RRDR motif) with cdc-48.1 (via N-terminus) and cdc-48.2 (via N-terminus); the interaction with cdc-48.1 is not required for atx-3 enzymatic activity. Interacts (via C-terminus) with ubxn-5. May interact with ned-8. Expressed in germline (at protein level). Expressed in spermatheca, pharynx, dorsal and ventral cords, some head neurons, hypodermis, body wall muscles and coelomocytes.

Its subcellular location is the cytoplasm. It localises to the nucleus. It is found in the nucleolus. It carries out the reaction Thiol-dependent hydrolysis of ester, thioester, amide, peptide and isopeptide bonds formed by the C-terminal Gly of ubiquitin (a 76-residue protein attached to proteins as an intracellular targeting signal).. Functionally, acts as a chain editing deubiquitinating enzyme that binds and cleaves 'Lys-48'-linked polyubiquitin chains, with a preference for chains containing four or more ubiquitin molecules thereby modulating protein degradation by the ubiquitin-proteasome pathway. Probably by regulating the IGF-1-insulin-like pathway, regulates lifespan. Regulates germline DNA double-strand-break repair and apoptosis in response to DNA damage by recruiting E4 ubiquitin-protein ligase ufd-2 to DNA repair foci. Interacts with key regulators of transcription and represses transcription. Acts as a histone-binding protein that regulates transcription. This Caenorhabditis elegans protein is Ataxin-3 homolog (atx-3).